The primary structure comprises 101 residues: Chaperone modulatory protein CbpM (101 aa).

Belongs to the CbpM family.

Its function is as follows. Interacts with CbpA and inhibits both the DnaJ-like co-chaperone activity and the DNA binding activity of CbpA. Together with CbpA, modulates the activity of the DnaK chaperone system. Does not inhibit the co-chaperone activity of DnaJ. This Pseudomonas putida (strain W619) protein is Chaperone modulatory protein CbpM.